The following is a 337-amino-acid chain: Phosphate acyltransferase (337 aa).

This sequence belongs to the PlsX family. In terms of assembly, homodimer. Probably interacts with PlsY.

It localises to the cytoplasm. The enzyme catalyses a fatty acyl-[ACP] + phosphate = an acyl phosphate + holo-[ACP]. It participates in lipid metabolism; phospholipid metabolism. Catalyzes the reversible formation of acyl-phosphate (acyl-PO(4)) from acyl-[acyl-carrier-protein] (acyl-ACP). This enzyme utilizes acyl-ACP as fatty acyl donor, but not acyl-CoA. The chain is Phosphate acyltransferase from Listeria monocytogenes serotype 4b (strain F2365).